A 223-amino-acid chain; its full sequence is Sigma non-opioid intracellular receptor 1 (223 aa).

The Lumenal segment spans residues 1-9 (MCWAVGRRW). The targeting to endoplasmic reticulum-associated lipid droplets stretch occupies residues 2–8 (CWAVGRR). A helical transmembrane segment spans residues 10-30 (AWAALLLAVAAVLAQVVWLWL). Topologically, residues 31 to 223 (GTQSFVFQHE…LTTYLFGQDA (193 aa)) are cytoplasmic. The important for ligand-binding stretch occupies residues 99–106 (SLSEYVLL). Positions 177–223 (VIPSTLGFALADTVFSTQDFLTLFYTLRAYARGLRLELTTYLFGQDA) are C-terminal hydrophobic region.

The protein belongs to the ERG2 family. In terms of assembly, homotrimer. Forms a ternary complex with ANK2 and ITPR3. The complex is disrupted by agonists. Interacts with KCNA4. Interacts with KCNA2; cocaine consumption leads to increased interaction. Interacts with RNF112 in an oxidative stress-regulated manner.

Its subcellular location is the nucleus inner membrane. It localises to the nucleus outer membrane. The protein resides in the nucleus envelope. It is found in the cytoplasmic vesicle. The protein localises to the endoplasmic reticulum membrane. Its subcellular location is the membrane. It localises to the lipid droplet. The protein resides in the cell junction. It is found in the cell membrane. The protein localises to the cell projection. Its subcellular location is the growth cone. It localises to the postsynaptic density membrane. Its function is as follows. Functions in lipid transport from the endoplasmic reticulum and is involved in a wide array of cellular functions probably through regulation of the biogenesis of lipid microdomains at the plasma membrane. Involved in the regulation of different receptors it plays a role in BDNF signaling and EGF signaling. Also regulates ion channels like the potassium channel and could modulate neurotransmitter release. Plays a role in calcium signaling through modulation together with ANK2 of the ITP3R-dependent calcium efflux at the endoplasmic reticulum. Plays a role in several other cell functions including proliferation, survival and death. Originally identified for its ability to bind various psychoactive drugs it is involved in learning processes, memory and mood alteration. Necessary for proper mitochondrial axonal transport in motor neurons, in particular the retrograde movement of mitochondria. Plays a role in protecting cells against oxidative stress-induced cell death via its interaction with RNF112. This is Sigma non-opioid intracellular receptor 1 (SIGMAR1) from Bos taurus (Bovine).